Here is a 441-residue protein sequence, read N- to C-terminus: Chitinase-like protein Idgf3 (441 aa).

The first 23 residues, 1 to 23 (MTGSLWLSLALSLAVLAQFKVSA), serve as a signal peptide directing secretion. The region spanning 25-441 (PNLVCFYDSQ…MLRAIKYRLL (417 aa)) is the GH18 domain. The cysteines at positions 29 and 56 are disulfide-linked. An N-linked (GlcNAc...) asparagine glycan is attached at N221. The segment at 307–331 (KDSGDSGMPVVPSTQGPAPAGPQSK) is disordered. An intrachain disulfide couples C342 to C425.

Belongs to the glycosyl hydrolase 18 family. IDGF subfamily. Glycosylated. As to expression, primarily expressed in yolk cells and fat body. In larvae, it is expressed in small and large salivary gland cells, and weakly expressed in imaginal disks. Less expressed than Idgf2 and Idgf4.

It localises to the secreted. In terms of biological role, cooperates with insulin-like peptides to stimulate the proliferation, polarization and motility of imaginal disk cells. May act by stabilizing the binding of insulin-like peptides to its receptor through a simultaneous interaction with both molecules to form a multiprotein signaling complex. This Drosophila melanogaster (Fruit fly) protein is Chitinase-like protein Idgf3 (Idgf3).